We begin with the raw amino-acid sequence, 340 residues long: MTTAPQTLNTDVAIVGAGPTALFAAFECGMLKLSCVLIDALDSVGGQCAALYPEKPIYDIPAHPAIEGGALIEALEQQIAPFDVPRLLGSRVETLEGQRGAFTLKTARGDVITAKAVIIAAGAGAFGPNRPPLDGLEAYERTGAVQYYVKKRADFTGKRVVVAGGGDSALDWALSLSEVAAQVYLLHRRDRFRGAPETLSRIEQQIAAGKIEKVVPYQLHALHGTDGVLSTVEVTTLEGTSRHIEADALLPFYGLSTDLGPIALWGLDTHRNTVPVTPATLESSTPGIFAIGDVATYPGKLKLILQGFSEGAMAAHAIHAIVHPDTALHFEYSTSKGVPG.

Positions 20, 39, 47, 52, 92, 126, 293, and 334 each coordinate FAD.

This sequence belongs to the ferredoxin--NADP reductase type 2 family. As to quaternary structure, homodimer. The cofactor is FAD.

The catalysed reaction is 2 reduced [2Fe-2S]-[ferredoxin] + NADP(+) + H(+) = 2 oxidized [2Fe-2S]-[ferredoxin] + NADPH. The polypeptide is Ferredoxin--NADP reductase (Gluconobacter oxydans (strain 621H) (Gluconobacter suboxydans)).